The sequence spans 169 residues: Nascent polypeptide-associated complex subunit alpha (169 aa).

Positions 14–78 (NKNEKKAREM…AKIDNFSQKL (65 aa)) constitute an NAC-A/B domain. The tract at residues 85–128 (IQSVSKSPEEIQKDMQLAADQAGDESAKPAAAAEEDDEAPVDAG) is disordered. The region spanning 130–169 (LSAEDIELVASQANVSKNKAIKALKEHNGDIVNAIMALSK) is the UBA domain.

It belongs to the NAC-alpha family. In terms of assembly, part of the nascent polypeptide-associated complex (NAC), consisting of EGD2 and EGD1. NAC associates with ribosomes via EGD1.

The protein resides in the cytoplasm. Its subcellular location is the nucleus. Component of the nascent polypeptide-associated complex (NAC), a dynamic component of the ribosomal exit tunnel, protecting the emerging polypeptides from interaction with other cytoplasmic proteins to ensure appropriate nascent protein targeting. The NAC complex also promotes mitochondrial protein import by enhancing productive ribosome interactions with the outer mitochondrial membrane and blocks the inappropriate interaction of ribosomes translating non-secretory nascent polypeptides with translocation sites in the membrane of the endoplasmic reticulum. EGD2 may also be involved in transcription regulation. In Vanderwaltozyma polyspora (strain ATCC 22028 / DSM 70294 / BCRC 21397 / CBS 2163 / NBRC 10782 / NRRL Y-8283 / UCD 57-17) (Kluyveromyces polysporus), this protein is Nascent polypeptide-associated complex subunit alpha (EGD2).